The primary structure comprises 391 residues: Adhesion defective protein 1 (391 aa).

Over residues 180-190 the composition is skewed to polar residues; it reads SQSRPPQNQIQ. Disordered stretches follow at residues 180–217 and 366–391; these read SQSR…PDSP and VEGE…RTKV. Residues 201 to 211 show a composition bias toward low complexity; sequence SESVNINSSSS. Residues 370-383 are compositionally biased toward polar residues; sequence NPNNNPNFYSSDML.

The protein belongs to the adn1/SEU family.

It localises to the nucleus. Probable transcriptional regulator involved in cell adhesion. This chain is Adhesion defective protein 1 (adn1), found in Schizosaccharomyces pombe (strain 972 / ATCC 24843) (Fission yeast).